The following is a 130-amino-acid chain: Fluoride-specific ion channel FluC 2 (130 aa).

4 consecutive transmembrane segments (helical) span residues 4–24 (GLSTYKSFFLVAFGAVPGAIC), 38–58 (NLWGILLVNSSACLLLGFFLA), 72–92 (LYLLLCVGFLGSFSTFSSLIL), and 103–123 (WMELFLFTFTSIGLGIIFISL). Na(+)-binding residues include Gly82 and Ser85.

Belongs to the fluoride channel Fluc/FEX (TC 1.A.43) family.

It localises to the cell inner membrane. It catalyses the reaction fluoride(in) = fluoride(out). Na(+) is not transported, but it plays an essential structural role and its presence is essential for fluoride channel function. Functionally, fluoride-specific ion channel. Important for reducing fluoride concentration in the cell, thus reducing its toxicity. This is Fluoride-specific ion channel FluC 2 from Prochlorococcus marinus (strain SARG / CCMP1375 / SS120).